The sequence spans 160 residues: Cyclic pyranopterin monophosphate synthase (160 aa).

Substrate-binding positions include 75 to 77 and 113 to 114; these read LCH and ME. Asp-128 is a catalytic residue.

It belongs to the MoaC family. Homohexamer; trimer of dimers.

The enzyme catalyses (8S)-3',8-cyclo-7,8-dihydroguanosine 5'-triphosphate = cyclic pyranopterin phosphate + diphosphate. Its pathway is cofactor biosynthesis; molybdopterin biosynthesis. Catalyzes the conversion of (8S)-3',8-cyclo-7,8-dihydroguanosine 5'-triphosphate to cyclic pyranopterin monophosphate (cPMP). This Ruthia magnifica subsp. Calyptogena magnifica protein is Cyclic pyranopterin monophosphate synthase.